A 247-amino-acid polypeptide reads, in one-letter code: Malonyl-[acyl-carrier protein] O-methyltransferase (247 aa).

It belongs to the methyltransferase superfamily.

It catalyses the reaction malonyl-[ACP] + S-adenosyl-L-methionine = malonyl-[ACP] methyl ester + S-adenosyl-L-homocysteine. Its pathway is cofactor biosynthesis; biotin biosynthesis. In terms of biological role, converts the free carboxyl group of a malonyl-thioester to its methyl ester by transfer of a methyl group from S-adenosyl-L-methionine (SAM). It allows to synthesize pimeloyl-ACP via the fatty acid synthetic pathway. The protein is Malonyl-[acyl-carrier protein] O-methyltransferase of Buchnera aphidicola subsp. Baizongia pistaciae (strain Bp).